The following is a 379-amino-acid chain: Chaperone protein DnaJ (379 aa).

The J domain maps to 5–70; it reads DYYEVLGVAK…QKRAAYDQYG (66 aa). A CR-type zinc finger spans residues 139 to 217; it reads GYDTQIRVPS…CHGAGKVKET (79 aa). Positions 152, 155, 169, 172, 191, 194, 205, and 208 each coordinate Zn(2+). CXXCXGXG motif repeat units follow at residues 152 to 159, 169 to 176, 191 to 198, and 205 to 212; these read CEICHGSG, CPTCSGSG, CPKCHGTG, and CGHCHGAG.

Belongs to the DnaJ family. As to quaternary structure, homodimer. It depends on Zn(2+) as a cofactor.

Its subcellular location is the cytoplasm. Participates actively in the response to hyperosmotic and heat shock by preventing the aggregation of stress-denatured proteins and by disaggregating proteins, also in an autonomous, DnaK-independent fashion. Unfolded proteins bind initially to DnaJ; upon interaction with the DnaJ-bound protein, DnaK hydrolyzes its bound ATP, resulting in the formation of a stable complex. GrpE releases ADP from DnaK; ATP binding to DnaK triggers the release of the substrate protein, thus completing the reaction cycle. Several rounds of ATP-dependent interactions between DnaJ, DnaK and GrpE are required for fully efficient folding. Also involved, together with DnaK and GrpE, in the DNA replication of plasmids through activation of initiation proteins. The sequence is that of Chaperone protein DnaJ from Paraburkholderia phytofirmans (strain DSM 17436 / LMG 22146 / PsJN) (Burkholderia phytofirmans).